The primary structure comprises 313 residues: Formimidoylglutamase (313 aa).

Positions 130, 155, 157, 159, 241, and 243 each coordinate Mn(2+).

It belongs to the arginase family. Mn(2+) serves as cofactor.

The enzyme catalyses N-formimidoyl-L-glutamate + H2O = formamide + L-glutamate. The protein operates within amino-acid degradation; L-histidine degradation into L-glutamate; L-glutamate from N-formimidoyl-L-glutamate (hydrolase route): step 1/1. Catalyzes the conversion of N-formimidoyl-L-glutamate to L-glutamate and formamide. In Salmonella typhi, this protein is Formimidoylglutamase.